The sequence spans 569 residues: DNA-binding protein eta2 (569 aa).

Disordered regions lie at residues methionine 1–cysteine 26 and lysine 133–arginine 159. The span at isoleucine 9–cysteine 26 shows a compositional bias: polar residues. Serine 21 carries the post-translational modification Phosphoserine. Myb-like domains follow at residues leucine 322–valine 371 and glutamate 377–isoleucine 459. The segment at isoleucine 459–lysine 487 is disordered. Over residues lysine 474–lysine 487 the composition is skewed to basic residues.

Its subcellular location is the nucleus. In Schizosaccharomyces pombe (strain 972 / ATCC 24843) (Fission yeast), this protein is DNA-binding protein eta2 (eta2).